Consider the following 193-residue polypeptide: MIHHLKGQLIEKNPTYVVIECNGIGYYINISLHTFSLIPDSEAVSVYTHLQVKEDSHTLYGFAEKSEREIFRLLISVSGVGTSTARMMLSSLQPREVTEAIASEDVATIQSVKGIGAKTAQRVILDLKDKVLKVLGDDEVFVSQSNTNKEEALSALEILGYNRRQAGKVVEKILKEDPESTVESIIKMALKKL.

The segment at 1–63 (MIHHLKGQLI…EDSHTLYGFA (63 aa)) is domain I. The segment at 64–142 (EKSEREIFRL…KVLGDDEVFV (79 aa)) is domain II. A flexible linker region spans residues 143–145 (SQS). Positions 145–193 (SNTNKEEALSALEILGYNRRQAGKVVEKILKEDPESTVESIIKMALKKL) are domain III.

This sequence belongs to the RuvA family. Homotetramer. Forms an RuvA(8)-RuvB(12)-Holliday junction (HJ) complex. HJ DNA is sandwiched between 2 RuvA tetramers; dsDNA enters through RuvA and exits via RuvB. An RuvB hexamer assembles on each DNA strand where it exits the tetramer. Each RuvB hexamer is contacted by two RuvA subunits (via domain III) on 2 adjacent RuvB subunits; this complex drives branch migration. In the full resolvosome a probable DNA-RuvA(4)-RuvB(12)-RuvC(2) complex forms which resolves the HJ.

Its subcellular location is the cytoplasm. Its function is as follows. The RuvA-RuvB-RuvC complex processes Holliday junction (HJ) DNA during genetic recombination and DNA repair, while the RuvA-RuvB complex plays an important role in the rescue of blocked DNA replication forks via replication fork reversal (RFR). RuvA specifically binds to HJ cruciform DNA, conferring on it an open structure. The RuvB hexamer acts as an ATP-dependent pump, pulling dsDNA into and through the RuvAB complex. HJ branch migration allows RuvC to scan DNA until it finds its consensus sequence, where it cleaves and resolves the cruciform DNA. The polypeptide is Holliday junction branch migration complex subunit RuvA (Christiangramia forsetii (strain DSM 17595 / CGMCC 1.15422 / KT0803) (Gramella forsetii)).